The sequence spans 530 residues: T-complex protein 1 subunit gamma (530 aa).

Belongs to the TCP-1 chaperonin family. In terms of assembly, heterooligomeric complex of about 850 to 900 kDa that forms two stacked rings, 12 to 16 nm in diameter.

The protein resides in the cytoplasm. Molecular chaperone; assists the folding of proteins upon ATP hydrolysis. Known to play a role, in vitro, in the folding of actin and tubulin. This chain is T-complex protein 1 subunit gamma (cct3), found in Dictyostelium discoideum (Social amoeba).